Reading from the N-terminus, the 290-residue chain is Nucleoid occlusion protein (290 aa).

The segment at residues 153–172 (EALAQRLGKGQSTIANKLRL) is a DNA-binding region (H-T-H motif).

The protein belongs to the ParB family.

It localises to the cytoplasm. Its subcellular location is the nucleoid. Functionally, effects nucleoid occlusion by binding relatively nonspecifically to DNA and preventing the assembly of the division machinery in the vicinity of the nucleoid, especially under conditions that disturb the cell cycle. It helps to coordinate cell division and chromosome segregation by preventing the formation of the Z ring through the nucleoid, which would cause chromosome breakage. The chain is Nucleoid occlusion protein from Bacillus anthracis (strain A0248).